The primary structure comprises 660 residues: Cullin-associated NEDD8-dissociated protein 1 homolog (660 aa).

Lys16 participates in a covalent cross-link: Glycyl lysine isopeptide (Lys-Gly) (interchain with G-Cter in NEDD8). Positions 339-364 (TQNENDHGSDNLIDSDDGFGSDNDPE) are disordered. The span at 351–363 (IDSDDGFGSDNDP) shows a compositional bias: acidic residues.

In terms of assembly, interacts with unneddylated cullin CDC53. Post-translationally, neddylated at Lys-16.

Its function is as follows. Assembly factor of SCF (SKP1-CUL1-F-box protein) E3 ubiquitin ligase complexes that promotes the exchange of the substrate-recognition F-box subunit in SCF complexes, thereby playing a key role in the cellular repertoire of SCF complexes. Acts as a F-box protein exchange factor. Involved in the aging process. Longevity-assurance protein. This is Cullin-associated NEDD8-dissociated protein 1 homolog (LAG2) from Saccharomyces cerevisiae (strain ATCC 204508 / S288c) (Baker's yeast).